The chain runs to 155 residues: Fibroblast growth factor 1 (155 aa).

Ala-2 carries the N-acetylalanine modification. Positions 2–15 are excised as a propeptide; the sequence is AEGEITTFTALTEK. A Nuclear localization signal motif is present at residues 24–27; sequence KKPK. Heparin is bound at residue Asn-33. Residues 127 to 143 form a heparin-binding region; that stretch reads KKNGSCKRGPRTHYGQK.

This sequence belongs to the heparin-binding growth factors family. Monomer. Homodimer. Interacts with FGFR1, FGFR2, FGFR3 and FGFR4. Affinity between fibroblast growth factors (FGFs) and their receptors is increased by heparan sulfate glycosaminoglycans that function as coreceptors. Found in a complex with FGFBP1, FGF1 and FGF2. Interacts with FGFBP1. Part of a Cu(2+)-dependent multiprotein aggregate containing FGF1, S100A13 and SYT1. Interacts with SYT1. Interacts with S100A13. Interacts with LRRC59. Interacts with CSNKA, CSNKB and FIBP. While binding with LRRC59, CSNKA and FIBP seem mutually exclusive, CSNKB and FIBP may cooperatively interact with FGF1. Forms a ternary complex with FGFR1 and ITGAV:ITGB3 and induces the recruitment of PTPN11 to the complex. Post-translationally, in the nucleus, phosphorylated by PKC/PRKCD. Predominantly expressed in kidney and brain. Detected at much lower levels in heart and skeletal muscle.

It is found in the secreted. The protein localises to the cytoplasm. It localises to the cell cortex. The protein resides in the cytosol. Its subcellular location is the nucleus. Plays an important role in the regulation of cell survival, cell division, angiogenesis, cell differentiation and cell migration. Functions as a potent mitogen in vitro. Acts as a ligand for FGFR1 and integrins. Binds to FGFR1 in the presence of heparin leading to FGFR1 dimerization and activation via sequential autophosphorylation on tyrosine residues which act as docking sites for interacting proteins, leading to the activation of several signaling cascades. Binds to integrin ITGAV:ITGB3. Its binding to integrin, subsequent ternary complex formation with integrin and FGFR1, and the recruitment of PTPN11 to the complex are essential for FGF1 signaling. Induces the phosphorylation and activation of FGFR1, FRS2, MAPK3/ERK1, MAPK1/ERK2 and AKT1. Can induce angiogenesis. The polypeptide is Fibroblast growth factor 1 (FGF1) (Homo sapiens (Human)).